A 193-amino-acid polypeptide reads, in one-letter code: Putative 3-methyladenine DNA glycosylase (193 aa).

Belongs to the DNA glycosylase MPG family.

The sequence is that of Putative 3-methyladenine DNA glycosylase from Agrobacterium fabrum (strain C58 / ATCC 33970) (Agrobacterium tumefaciens (strain C58)).